The primary structure comprises 543 residues: T-complex protein 1 subunit eta (543 aa).

Methionine 1 is modified (N-acetylmethionine). An ADP-binding site is contributed by glycine 41. Glycine 41 lines the ATP pocket. Lysine 67 is subject to N6-acetyllysine. Residue aspartate 92 coordinates Mg(2+). 6 residues coordinate ADP: glycine 93, threonine 94, threonine 95, serine 96, serine 164, and serine 165. Glycine 93 contributes to the ATP binding site. Residue serine 96 coordinates ATP. 2 positions are modified to N6-acetyllysine: lysine 250 and lysine 320. Residues arginine 398 and glycine 409 each coordinate ATP. Glycine 409 lines the ADP pocket. Residue lysine 430 forms a Glycyl lysine isopeptide (Lys-Gly) (interchain with G-Cter in SUMO2) linkage. ADP is bound by residues glutamate 494 and arginine 499. An ATP-binding site is contributed by arginine 499. Position 535 is an omega-N-methylarginine (arginine 535).

This sequence belongs to the TCP-1 chaperonin family. In terms of assembly, component of the chaperonin-containing T-complex (TRiC), a hexadecamer composed of two identical back-to-back stacked rings enclosing a protein folding chamber. Each ring is made up of eight different subunits: TCP1/CCT1, CCT2, CCT3, CCT4, CCT5, CCT6A/CCT6, CCT7, CCT8. Interacts with PACRG. Interacts with DLEC1.

The protein resides in the cytoplasm. The catalysed reaction is ATP + H2O = ADP + phosphate + H(+). In terms of biological role, component of the chaperonin-containing T-complex (TRiC), a molecular chaperone complex that assists the folding of actin, tubulin and other proteins upon ATP hydrolysis. The TRiC complex mediates the folding of WRAP53/TCAB1, thereby regulating telomere maintenance. The polypeptide is T-complex protein 1 subunit eta (CCT7) (Pongo abelii (Sumatran orangutan)).